Reading from the N-terminus, the 200-residue chain is Probable GTP-binding protein EngB (200 aa).

An EngB-type G domain is found at serine 25 to tryptophan 199. GTP contacts are provided by residues glycine 33 to serine 40, glycine 60 to leucine 64, aspartate 78 to glycine 81, threonine 145 to aspartate 148, and phenylalanine 178 to serine 180. Mg(2+) contacts are provided by serine 40 and threonine 62.

The protein belongs to the TRAFAC class TrmE-Era-EngA-EngB-Septin-like GTPase superfamily. EngB GTPase family. Mg(2+) is required as a cofactor.

Functionally, necessary for normal cell division and for the maintenance of normal septation. The sequence is that of Probable GTP-binding protein EngB from Legionella pneumophila (strain Paris).